The primary structure comprises 277 residues: Diaminopimelate epimerase (277 aa).

Substrate is bound by residues N15 and N74. C83 functions as the Proton donor in the catalytic mechanism. Substrate-binding positions include 84 to 85 (GN), N159, N194, and 212 to 213 (ER). C221 serves as the catalytic Proton acceptor. 222 to 223 (GT) is a binding site for substrate.

Belongs to the diaminopimelate epimerase family. In terms of assembly, homodimer.

The protein localises to the cytoplasm. The catalysed reaction is (2S,6S)-2,6-diaminopimelate = meso-2,6-diaminopimelate. Its pathway is amino-acid biosynthesis; L-lysine biosynthesis via DAP pathway; DL-2,6-diaminopimelate from LL-2,6-diaminopimelate: step 1/1. Functionally, catalyzes the stereoinversion of LL-2,6-diaminopimelate (L,L-DAP) to meso-diaminopimelate (meso-DAP), a precursor of L-lysine and an essential component of the bacterial peptidoglycan. Involved in the succinylase branch of the diaminopimelate biosynthesis. This Corynebacterium glutamicum (strain ATCC 13032 / DSM 20300 / JCM 1318 / BCRC 11384 / CCUG 27702 / LMG 3730 / NBRC 12168 / NCIMB 10025 / NRRL B-2784 / 534) protein is Diaminopimelate epimerase.